Reading from the N-terminus, the 186-residue chain is Apolipophorin-3 (186 aa).

A signal peptide spans 1–18 (MAAKYVFVVAACSALAQA). Positions 19–23 (GIVRR) are excised as a propeptide.

This sequence belongs to the insect apolipophorin-3 family. As to quaternary structure, equilibrium between a soluble monomer and a bound lipoprotein form. Apolipophorin-3 associates with lipophorin during lipid loading until each particle contains 9 or 14 molecules of apolipophorin-3. In terms of tissue distribution, expressed in hemolymph. Also found in hemocytes and fat body.

The protein resides in the secreted. Assists in the loading of diacylglycerol, generated from triacylglycerol stores in the fat body through the action of adipokinetic hormone, into lipophorin, the hemolymph lipoprotein. It increases the lipid carrying capacity of lipophorin by covering the expanding hydrophobic surface resulting from diacylglycerol uptake. It thus plays a critical role in the transport of lipids during flight in several species of insects. Has antibacterial activity against the Gram-positive bacteria L.monocytogenes (MIC=6.5 uM). Lacks antibacterial activity against the Gram-positive bacteria B.circulans, M.luteus, S.aureus, and S.lutea, and the Gram-negative bacteria E.coli D31, E.coli ATCC 25922, and S.typhimurium. Lacks antifungal activity against S.cerevisiae, P.pastoris, Z.marxianus, C.albicans, C.wickerhamii, A.niger, F.oxysporum, and T.harizianum. This is Apolipophorin-3 from Galleria mellonella (Greater wax moth).